We begin with the raw amino-acid sequence, 124 residues long: Riboflavin kinase (124 aa).

Residue 10 to 15 coordinates CDP; it reads GLGKAA. The Mg(2+) site is built by threonine 39 and asparagine 41. Positions 93 and 101 each coordinate FMN. A CDP-binding site is contributed by 106–109; that stretch reads DKLR.

It belongs to the archaeal riboflavin kinase family. Requires Mg(2+) as cofactor.

It catalyses the reaction riboflavin + CTP = CDP + FMN + H(+). Its pathway is cofactor biosynthesis; FMN biosynthesis; FMN from riboflavin (CTP route): step 1/1. In terms of biological role, catalyzes the CTP-dependent phosphorylation of riboflavin (vitamin B2) to form flavin mononucleotide (FMN). This Methanobrevibacter smithii (strain ATCC 35061 / DSM 861 / OCM 144 / PS) protein is Riboflavin kinase.